A 347-amino-acid polypeptide reads, in one-letter code: Glycerol-3-phosphate dehydrogenase [NAD(P)+] (347 aa).

NADPH-binding residues include Trp20, Arg39, and Lys118. Sn-glycerol 3-phosphate contacts are provided by Lys118, Gly152, and Ser154. NADPH is bound at residue Ala156. Lys207, Asp260, Ser270, Arg271, and Asn272 together coordinate sn-glycerol 3-phosphate. Catalysis depends on Lys207, which acts as the Proton acceptor. Residue Arg271 coordinates NADPH. Residues Val295 and Glu297 each contribute to the NADPH site.

Belongs to the NAD-dependent glycerol-3-phosphate dehydrogenase family.

It is found in the cytoplasm. The catalysed reaction is sn-glycerol 3-phosphate + NAD(+) = dihydroxyacetone phosphate + NADH + H(+). The enzyme catalyses sn-glycerol 3-phosphate + NADP(+) = dihydroxyacetone phosphate + NADPH + H(+). Its pathway is membrane lipid metabolism; glycerophospholipid metabolism. Functionally, catalyzes the reduction of the glycolytic intermediate dihydroxyacetone phosphate (DHAP) to sn-glycerol 3-phosphate (G3P), the key precursor for phospholipid synthesis. This Cupriavidus pinatubonensis (strain JMP 134 / LMG 1197) (Cupriavidus necator (strain JMP 134)) protein is Glycerol-3-phosphate dehydrogenase [NAD(P)+].